The following is a 292-amino-acid chain: MKVYAPATIANFGPGFDVFGLAIETPRDTVIAKESDDFRIEVEGYKVPENDENVALVAAKALFKLVGEEGGIYLKLKKGIRPKSGLGSSGASSIAGAVAAARILGVEDDEIIIRAALEGERKASGSPHGDNVVPSYYGNFTIVESLNPLRVHNIEVDFKVVVILPSVEVPTSEARKVLPKKVPLKDAVKNIALASSLVLALKEGNLEEVGRLLEDHLALPYRLSLVPWFPKVKEAAKEAGAYGVMISGSGPAVFALGENLKEIGKAMKEAFESFGIEAEYWVTKVGRGAKWC.

81–91 (RPKSGLGSSGA) is a binding site for ATP.

Belongs to the GHMP kinase family. Homoserine kinase subfamily.

Its subcellular location is the cytoplasm. It catalyses the reaction L-homoserine + ATP = O-phospho-L-homoserine + ADP + H(+). Its pathway is amino-acid biosynthesis; L-threonine biosynthesis; L-threonine from L-aspartate: step 4/5. In terms of biological role, catalyzes the ATP-dependent phosphorylation of L-homoserine to L-homoserine phosphate. This is Homoserine kinase from Pyrococcus furiosus (strain ATCC 43587 / DSM 3638 / JCM 8422 / Vc1).